Consider the following 130-residue polypeptide: Small ribosomal subunit protein uS8 (130 aa).

Belongs to the universal ribosomal protein uS8 family. In terms of assembly, part of the 30S ribosomal subunit. Contacts proteins S5 and S12.

Functionally, one of the primary rRNA binding proteins, it binds directly to 16S rRNA central domain where it helps coordinate assembly of the platform of the 30S subunit. In Neisseria meningitidis serogroup C (strain 053442), this protein is Small ribosomal subunit protein uS8.